Reading from the N-terminus, the 162-residue chain is MEFLDATFFAFVGLVLFLALVVYLKVPGMMAKSLDDRADQIRNELAEAKRLREEAQHLLVEYQRKRKEAEAEAAHIVAAAEREAEMLTAEAMKKTEEFVANRTALSEQKIKQAEVEAMKAVRSAAVDLAIAAAETVLAKRADAKVQSELFGNAVGQVKTRLN.

A helical membrane pass occupies residues 3 to 23 (FLDATFFAFVGLVLFLALVVY).

This sequence belongs to the ATPase B chain family. F-type ATPases have 2 components, F(1) - the catalytic core - and F(0) - the membrane proton channel. F(1) has five subunits: alpha(3), beta(3), gamma(1), delta(1), epsilon(1). F(0) has three main subunits: a(1), b(2) and c(10-14). The alpha and beta chains form an alternating ring which encloses part of the gamma chain. F(1) is attached to F(0) by a central stalk formed by the gamma and epsilon chains, while a peripheral stalk is formed by the delta and b chains.

The protein resides in the cell inner membrane. In terms of biological role, f(1)F(0) ATP synthase produces ATP from ADP in the presence of a proton or sodium gradient. F-type ATPases consist of two structural domains, F(1) containing the extramembraneous catalytic core and F(0) containing the membrane proton channel, linked together by a central stalk and a peripheral stalk. During catalysis, ATP synthesis in the catalytic domain of F(1) is coupled via a rotary mechanism of the central stalk subunits to proton translocation. Its function is as follows. Component of the F(0) channel, it forms part of the peripheral stalk, linking F(1) to F(0). The protein is ATP synthase subunit b 1 of Rhizobium johnstonii (strain DSM 114642 / LMG 32736 / 3841) (Rhizobium leguminosarum bv. viciae).